Here is a 347-residue protein sequence, read N- to C-terminus: Bifunctional methylenetetrahydrofolate dehydrogenase/cyclohydrolase 2, mitochondrial (347 aa).

Residues tyrosine 98–lysine 102 and valine 145–leucine 147 each bind substrate. NAD(+) contacts are provided by residues glycine 214 to serine 216 and arginine 247. Proline 323–glycine 327 contributes to the substrate binding site.

The protein belongs to the tetrahydrofolate dehydrogenase/cyclohydrolase family. Mg(2+) serves as cofactor.

The protein localises to the mitochondrion inner membrane. It catalyses the reaction (6R)-5,10-methylene-5,6,7,8-tetrahydrofolate + NAD(+) = (6R)-5,10-methenyltetrahydrofolate + NADH. It carries out the reaction (6R)-5,10-methenyltetrahydrofolate + H2O = (6R)-10-formyltetrahydrofolate + H(+). The enzyme catalyses (6R)-5,10-methylene-5,6,7,8-tetrahydrofolate + NADP(+) = (6R)-5,10-methenyltetrahydrofolate + NADPH. The protein operates within one-carbon metabolism; tetrahydrofolate interconversion. In terms of biological role, bifunctional mitochondrial folate-interconverting enzyme that has both NAD/NADP-dependent methylenetetrahydrofolate dehydrogenase and methenyltetrahydrofolate cyclohydrolase activities. This chain is Bifunctional methylenetetrahydrofolate dehydrogenase/cyclohydrolase 2, mitochondrial, found in Callithrix jacchus (White-tufted-ear marmoset).